A 295-amino-acid polypeptide reads, in one-letter code: UDP-N-acetylenolpyruvoylglucosamine reductase (295 aa).

One can recognise an FAD-binding PCMH-type domain in the interval 25–189; it reads RVGGPADLFA…LEALFRLDQR (165 aa). The active site involves R169. S218 serves as the catalytic Proton donor. Residue E288 is part of the active site.

This sequence belongs to the MurB family. Requires FAD as cofactor.

It localises to the cytoplasm. The catalysed reaction is UDP-N-acetyl-alpha-D-muramate + NADP(+) = UDP-N-acetyl-3-O-(1-carboxyvinyl)-alpha-D-glucosamine + NADPH + H(+). The protein operates within cell wall biogenesis; peptidoglycan biosynthesis. Cell wall formation. The chain is UDP-N-acetylenolpyruvoylglucosamine reductase from Pelobacter propionicus (strain DSM 2379 / NBRC 103807 / OttBd1).